The sequence spans 281 residues: MSTETNNNLCIGCNKPFKSTDNIKTSNFKKYHEQCFSQDLNCSKCSGPIIASAEHKQVLGKIYHSKCFTCASCSKVLSDNDFSEISGIPCCKSCFTEIKFNPNFAISKFGSASAITQNDEKTKEKFEMKTNLYNNLQKGKDICTWCRNQIQADPDNEAVSFGGNIYHSNCFTCSKCSSSIGKNQFVTGSDGSAICKSCSDKSKQVNCFACKKPIDSTFTVVSGNKYHPNCFVCSQCKGSLEKGYIEKDGPVCGKCAATFTQPQTRTFAYSNGKGARPNGRW.

3 LIM zinc-binding domains span residues 40–101 (LNCS…IKFN), 141–205 (DICT…SKQV), and 206–262 (NCFA…FTQP).

The polypeptide is LIM domain-containing protein G (limG) (Dictyostelium discoideum (Social amoeba)).